We begin with the raw amino-acid sequence, 280 residues long: MTTLIRRGRRAEEGQERRADSEDSIKDKDEEDSADSKEIRLTLMEEVLLLGLKDKEGYTSFWNDCISSGLRGGILIELFLRGRVVLEPATIRKKRLTDKKVLLKSDKLTGDVLLDETIKHMKATEPAETVQSWIELLTGETWNPFKLQYQLRNVRERIAKNLVEKGILTTEKQNFLLFDMTTHPVTNTTEKQRLVKKLQESLLEKWVNDPHRMDKRTLALLVLAHSSDVLENAFSSLSDEKYDMAMIRSKELLDLEPDTEGTKPNACEMIWAVLSAFNKS.

The segment at 1–32 (MTTLIRRGRRAEEGQERRADSEDSIKDKDEED) is disordered. Basic and acidic residues predominate over residues 10–32 (RAEEGQERRADSEDSIKDKDEED). A 1,2-diacyl-sn-glycero-3-phospho-(1D-myo-inositol 4-phosphate)-binding residues include tryptophan 62, arginine 71, arginine 152, and arginine 155. The beta-hairpin required for oligomerization stretch occupies residues 171-182 (EKQNFLLFDMTT).

It belongs to the GOLPH3/VPS74 family. Homooligomer.

It is found in the golgi apparatus. It localises to the golgi stack membrane. The protein localises to the trans-Golgi network membrane. In terms of biological role, phosphatidylinositol-4-phosphate-binding protein that may play a role in the process of vesicle budding at the Golgi and anterograde transport to the plasma membrane. The protein is Golgi phosphoprotein 3-like B (golph3l-b) of Xenopus laevis (African clawed frog).